The chain runs to 204 residues: FMN-dependent NADH:quinone oxidoreductase 5 (204 aa).

Ser10 provides a ligand contact to FMN.

It belongs to the azoreductase type 1 family. In terms of assembly, homodimer. FMN is required as a cofactor.

The enzyme catalyses 2 a quinone + NADH + H(+) = 2 a 1,4-benzosemiquinone + NAD(+). The catalysed reaction is N,N-dimethyl-1,4-phenylenediamine + anthranilate + 2 NAD(+) = 2-(4-dimethylaminophenyl)diazenylbenzoate + 2 NADH + 2 H(+). Its function is as follows. Quinone reductase that provides resistance to thiol-specific stress caused by electrophilic quinones. Functionally, also exhibits azoreductase activity. Catalyzes the reductive cleavage of the azo bond in aromatic azo compounds to the corresponding amines. In Burkholderia lata (strain ATCC 17760 / DSM 23089 / LMG 22485 / NCIMB 9086 / R18194 / 383), this protein is FMN-dependent NADH:quinone oxidoreductase 5.